The chain runs to 267 residues: FCS-Like Zinc finger 8 (267 aa).

Disordered stretches follow at residues 1 to 29 and 124 to 156; these read MLKK…KTTP and DSPI…GSPR. Composition is skewed to polar residues over residues 15–28 and 126–141; these read ETNQ…SKTT and PISS…NSQP. The FLZ-type zinc-finger motif lies at 221-265; the sequence is SFLSCCCNCKKSLGPRDDIFMYRGDRAFCSSECRSIEMMMSEEND.

The protein belongs to the FLZ family. Interacts with KIN10 and KIN11 via its FLZ-type zinc finger domain. Interacts with KINB1, KINB2, KINB3 and SNF4 via its N-terminal part. Interacts with HB21/ZHD3.

Functionally, may act as an adapter to facilitate the interaction of SnRK1 complex with effector proteins, conferring tissue- and stimulus-type specific differences in the SnRK1 regulation pathway. This Arabidopsis thaliana (Mouse-ear cress) protein is FCS-Like Zinc finger 8.